The primary structure comprises 475 residues: tRNA (guanine(37)-N(1))-methyltransferase (475 aa).

S-adenosyl-L-methionine contacts are provided by residues His-219, 258 to 259 (DL), and 286 to 287 (DG). Residues 306–328 (KITKQKPTSNDKKRNRKVESPTV) are disordered. S-adenosyl-L-methionine is bound at residue Asn-349. The span at 456 to 469 (NLVSQSDVSKSSDN) shows a compositional bias: polar residues. The disordered stretch occupies residues 456 to 475 (NLVSQSDVSKSSDNILEKDT).

This sequence belongs to the class I-like SAM-binding methyltransferase superfamily. TRM5/TYW2 family. As to quaternary structure, monomer.

Its subcellular location is the mitochondrion matrix. The protein localises to the nucleus. The protein resides in the cytoplasm. The enzyme catalyses guanosine(37) in tRNA + S-adenosyl-L-methionine = N(1)-methylguanosine(37) in tRNA + S-adenosyl-L-homocysteine + H(+). In terms of biological role, specifically methylates the N1 position of guanosine-37 in various cytoplasmic and mitochondrial tRNAs. Methylation is not dependent on the nature of the nucleoside 5' of the target nucleoside. This is the first step in the biosynthesis of wybutosine (yW), a modified base adjacent to the anticodon of tRNAs and required for accurate decoding. The chain is tRNA (guanine(37)-N(1))-methyltransferase from Batrachochytrium dendrobatidis (strain JAM81 / FGSC 10211) (Frog chytrid fungus).